Here is a 288-residue protein sequence, read N- to C-terminus: L-threonine kinase (288 aa).

80–90 contacts ATP; sequence PIAKGMASSTA.

It belongs to the GHMP kinase family. PduX subfamily.

The protein resides in the cytoplasm. The enzyme catalyses L-threonine + ATP = O-phospho-L-threonine + ADP + H(+). The protein operates within cofactor biosynthesis; adenosylcobalamin biosynthesis. It participates in polyol metabolism; 1,2-propanediol degradation. Functionally, L-threonine kinase that catalyzes the conversion of L-threonine to L-threonine-O-3-phosphate. Involved in the de novo synthesis of adenosylcobalamin (coenzyme B12) and the assimilation of cobyric acid. In terms of biological role, expression of a cosmid containing the full 21-gene pdu operon in E.coli allows E.coli to grow on 1,2-propanediol (1,2-PD) with the appearance of bacterial microcompartments (BMC) in its cytoplasm. The 1,2-PD-specific bacterial microcompartment (BMC) concentrates low levels of 1,2-PD catabolic enzymes, concentrates volatile reaction intermediates thus enhancing pathway flux and keeps the level of toxic, mutagenic propionaldehyde low. This gene probably benefits from its induction via the Pdu promoter, rather than a physical interaction with the BMC. This is L-threonine kinase from Citrobacter freundii.